We begin with the raw amino-acid sequence, 805 residues long: 1,4-alpha-glucan-branching enzyme 2-2, chloroplastic/amyloplastic (805 aa).

Residues 1-32 constitute a chloroplast transit peptide; the sequence is MVVIHGVSLTPRFTLPSRPLNTGFNAGNSTLS. Catalysis depends on aspartate 451, which acts as the Nucleophile. Glutamate 506 serves as the catalytic Proton donor.

Belongs to the glycosyl hydrolase 13 family. GlgB subfamily. As to quaternary structure, monomer. As to expression, expressed in seedlings, roots, stems, leaves, inflorescences, seeds and flowers.

It is found in the plastid. The protein resides in the chloroplast stroma. Its subcellular location is the amyloplast. The catalysed reaction is Transfers a segment of a (1-&gt;4)-alpha-D-glucan chain to a primary hydroxy group in a similar glucan chain.. It participates in glycan biosynthesis; starch biosynthesis. Functionally, catalyzes the formation of the alpha-1,6-glucosidic linkages in starch by scission of a 1,4-alpha-linked oligosaccharide from growing alpha-1,4-glucan chains and the subsequent attachment of the oligosaccharide to the alpha-1,6 position. This Arabidopsis thaliana (Mouse-ear cress) protein is 1,4-alpha-glucan-branching enzyme 2-2, chloroplastic/amyloplastic (SBE2.2).